The sequence spans 256 residues: Hydroxyacylglutathione hydrolase (256 aa).

Residues histidine 53, histidine 55, aspartate 57, histidine 58, histidine 111, aspartate 128, and histidine 166 each contribute to the Zn(2+) site.

This sequence belongs to the metallo-beta-lactamase superfamily. Glyoxalase II family. As to quaternary structure, monomer. Zn(2+) serves as cofactor.

It carries out the reaction an S-(2-hydroxyacyl)glutathione + H2O = a 2-hydroxy carboxylate + glutathione + H(+). It functions in the pathway secondary metabolite metabolism; methylglyoxal degradation; (R)-lactate from methylglyoxal: step 2/2. In terms of biological role, thiolesterase that catalyzes the hydrolysis of S-D-lactoyl-glutathione to form glutathione and D-lactic acid. In Thiobacillus denitrificans (strain ATCC 25259 / T1), this protein is Hydroxyacylglutathione hydrolase.